We begin with the raw amino-acid sequence, 279 residues long: Movement protein (279 aa).

This sequence belongs to the cucumovirus movement protein family.

It is found in the host cell junction. The protein resides in the host plasmodesma. In terms of biological role, transports viral genome to neighboring plant cells directly through plasmosdesmata, without any budding. The movement protein allows efficient cell to cell propagation, by bypassing the host cell wall barrier. Acts by forming a tubular structure at the host plasmodesmata, enlarging it enough to allow free passage of virion capsids. The protein is Movement protein of Cucumis sativus (Cucumber).